The primary structure comprises 98 residues: DNA-binding protein Fis (98 aa).

Residues 74 to 93 (QTRAAQMMGINRGTLRKKLK) constitute a DNA-binding region (H-T-H motif).

The protein belongs to the transcriptional regulatory Fis family. In terms of assembly, homodimer.

Functionally, activates ribosomal RNA transcription. Plays a direct role in upstream activation of rRNA promoters. The sequence is that of DNA-binding protein Fis from Proteus hauseri.